The primary structure comprises 130 residues: Phosphoribosyl-AMP cyclohydrolase (130 aa).

D74 lines the Mg(2+) pocket. Residue C75 participates in Zn(2+) binding. D76 and D78 together coordinate Mg(2+). The Zn(2+) site is built by C91 and C98.

Belongs to the PRA-CH family. In terms of assembly, homodimer. The cofactor is Mg(2+). Zn(2+) serves as cofactor.

Its subcellular location is the cytoplasm. The catalysed reaction is 1-(5-phospho-beta-D-ribosyl)-5'-AMP + H2O = 1-(5-phospho-beta-D-ribosyl)-5-[(5-phospho-beta-D-ribosylamino)methylideneamino]imidazole-4-carboxamide. Its pathway is amino-acid biosynthesis; L-histidine biosynthesis; L-histidine from 5-phospho-alpha-D-ribose 1-diphosphate: step 3/9. Its function is as follows. Catalyzes the hydrolysis of the adenine ring of phosphoribosyl-AMP. This is Phosphoribosyl-AMP cyclohydrolase from Bradyrhizobium sp. (strain ORS 278).